The chain runs to 217 residues: Ribosomal RNA small subunit methyltransferase G (217 aa).

S-adenosyl-L-methionine is bound by residues G79, F84, 130 to 131, and R148; that span reads AE.

Belongs to the methyltransferase superfamily. RNA methyltransferase RsmG family.

Its subcellular location is the cytoplasm. The catalysed reaction is guanosine(527) in 16S rRNA + S-adenosyl-L-methionine = N(7)-methylguanosine(527) in 16S rRNA + S-adenosyl-L-homocysteine. Functionally, specifically methylates the N7 position of guanine in position 527 of 16S rRNA. This Myxococcus xanthus (strain DK1622) protein is Ribosomal RNA small subunit methyltransferase G.